We begin with the raw amino-acid sequence, 299 residues long: MKFLTVAAAIFASTSLAVPTNNHNGGGACVPRPNPGNSNTSSAPGGNPTGGHTSSGPGTKPTGSHTSSGPATKPTDGNTSSGPGTKPTDGNTSSGIDCEVPRHAPTSGDDFKGICAAVGKQPLCCVIPVAGQDLLCQDITGGNSPSGQPTSVPGGQSTSVPGGNPTSIPGGQPTSVPGGQPTSVPGGHPTSAPTGHPTSVPGGQPTSVPGGNPTSVPGHHNPSPVGNDPSCCPSGLYSNPQCCAANVLGLADLDCSTPSQTFTTGDEFRNICATIGRQPMCCVLPVAGQAVLCEKPVGV.

The first 17 residues, 1 to 17 (MKFLTVAAAIFASTSLA), serve as a signal peptide directing secretion. N-linked (GlcNAc...) asparagine glycans are attached at residues Asn39, Asn78, and Asn91. Cystine bridges form between Cys232–Cys281, Cys242–Cys272, Cys243–Cys255, and Cys282–Cys293.

This sequence belongs to the cerato-ulmin hydrophobin family.

Its subcellular location is the secreted. The protein localises to the cell wall. It localises to the vacuole. The protein resides in the cytoplasmic vesicle. In terms of biological role, aerial growth, conidiation, and dispersal of filamentous fungi in the environment rely upon a capability of their secreting small amphipathic proteins called hydrophobins (HPBs) with low sequence identity. Class I can self-assemble into an outermost layer of rodlet bundles on aerial cell surfaces, conferring cellular hydrophobicity that supports fungal growth, development and dispersal; whereas Class II form highly ordered films at water-air interfaces through intermolecular interactions but contribute nothing to the rodlet structure. Hyd2C contributes to certain cell wall-related features, such as hydrophobicity but is not involved in cell wall-related events during fungal proliferation in host hemocoel. Does not contribute to conidial hydrophobicity. Involved actively in the asexual development. This Beauveria bassiana (strain ARSEF 2860) (White muscardine disease fungus) protein is Class II hydrophobin C.